The primary structure comprises 221 residues: Max dimerization protein 1 (221 aa).

A Nuclear localization signal motif is present at residues R21 to K49. Disordered regions lie at residues G29–R67 and S178–L221. The region spanning S55–L107 is the bHLH domain. Residues M193–L221 show a composition bias toward polar residues.

In terms of assembly, heterodimer with MAX; the interaction is required for DNA-binding. DNA binding requires dimerization with another bHLH protein; does not form homodimers, and does not bind to DNA in the absence of MAX in vitro. As to expression, expressed primarily in cells that have undergone terminal differentiation including notochord, floor plate and cement gland.

The protein resides in the nucleus. Functionally, component of a transcriptional repressor complex together with MAX. In complex with MAX binds to the core DNA sequence 5'-CAC[GA]TG-3'. Antagonizes MYC transcriptional activity by competing with MYC for MAX binding. Binds to the TERT promoter and represses telomerase expression, possibly by interfering with MYC binding. This chain is Max dimerization protein 1 (mxd1), found in Xenopus laevis (African clawed frog).